Here is an 860-residue protein sequence, read N- to C-terminus: Alanine--tRNA ligase (860 aa).

Histidine 563, histidine 567, cysteine 665, and histidine 669 together coordinate Zn(2+).

Belongs to the class-II aminoacyl-tRNA synthetase family. The cofactor is Zn(2+).

It localises to the cytoplasm. The enzyme catalyses tRNA(Ala) + L-alanine + ATP = L-alanyl-tRNA(Ala) + AMP + diphosphate. Catalyzes the attachment of alanine to tRNA(Ala) in a two-step reaction: alanine is first activated by ATP to form Ala-AMP and then transferred to the acceptor end of tRNA(Ala). Also edits incorrectly charged Ser-tRNA(Ala) and Gly-tRNA(Ala) via its editing domain. This Vibrio parahaemolyticus serotype O3:K6 (strain RIMD 2210633) protein is Alanine--tRNA ligase.